The following is a 469-amino-acid chain: Probable Xaa-Pro aminopeptidase PEPP (469 aa).

Positions 265, 276, 399, and 439 each coordinate Mn(2+).

It belongs to the peptidase M24B family. Mn(2+) serves as cofactor.

The enzyme catalyses Release of any N-terminal amino acid, including proline, that is linked to proline, even from a dipeptide or tripeptide.. Catalyzes the removal of a penultimate prolyl residue from the N-termini of peptides. This is Probable Xaa-Pro aminopeptidase PEPP (PEPP) from Coccidioides posadasii (strain C735) (Valley fever fungus).